The chain runs to 612 residues: Glycosyltransferase 25 family member (612 aa).

A signal peptide spans 1 to 20 (MNKQVIFGLLLACILVCISG). Asn106, Asn227, Asn263, and Asn524 each carry an N-linked (GlcNAc...) asparagine glycan. The Prevents secretion from ER motif lies at 609–612 (HQEL).

It belongs to the glycosyltransferase 25 family.

It localises to the endoplasmic reticulum lumen. The sequence is that of Glycosyltransferase 25 family member from Drosophila melanogaster (Fruit fly).